Consider the following 252-residue polypeptide: Phosphoglycolate phosphatase (252 aa).

D13 serves as the catalytic Nucleophile. Residues D13, D15, and D192 each coordinate Mg(2+).

Belongs to the HAD-like hydrolase superfamily. CbbY/CbbZ/Gph/YieH family. As to quaternary structure, monomer. It depends on Mg(2+) as a cofactor. Chloride is required as a cofactor.

The enzyme catalyses 2-phosphoglycolate + H2O = glycolate + phosphate. It functions in the pathway organic acid metabolism; glycolate biosynthesis; glycolate from 2-phosphoglycolate: step 1/1. Its function is as follows. Specifically catalyzes the dephosphorylation of 2-phosphoglycolate. Is involved in the dissimilation of the intracellular 2-phosphoglycolate formed during the DNA repair of 3'-phosphoglycolate ends, a major class of DNA lesions induced by oxidative stress. The polypeptide is Phosphoglycolate phosphatase (Salmonella choleraesuis (strain SC-B67)).